The primary structure comprises 169 residues: 6,7-dimethyl-8-ribityllumazine synthase (169 aa).

Residues Phe-24, 58-60 (ALE), and 82-84 (AVI) contribute to the 5-amino-6-(D-ribitylamino)uracil site. 87-88 (ET) provides a ligand contact to (2S)-2-hydroxy-3-oxobutyl phosphate. The Proton donor role is filled by His-90. Position 115 (Asn-115) interacts with 5-amino-6-(D-ribitylamino)uracil. Arg-129 contributes to the (2S)-2-hydroxy-3-oxobutyl phosphate binding site.

This sequence belongs to the DMRL synthase family.

It catalyses the reaction (2S)-2-hydroxy-3-oxobutyl phosphate + 5-amino-6-(D-ribitylamino)uracil = 6,7-dimethyl-8-(1-D-ribityl)lumazine + phosphate + 2 H2O + H(+). Its pathway is cofactor biosynthesis; riboflavin biosynthesis; riboflavin from 2-hydroxy-3-oxobutyl phosphate and 5-amino-6-(D-ribitylamino)uracil: step 1/2. Functionally, catalyzes the formation of 6,7-dimethyl-8-ribityllumazine by condensation of 5-amino-6-(D-ribitylamino)uracil with 3,4-dihydroxy-2-butanone 4-phosphate. This is the penultimate step in the biosynthesis of riboflavin. This chain is 6,7-dimethyl-8-ribityllumazine synthase, found in Burkholderia vietnamiensis (strain G4 / LMG 22486) (Burkholderia cepacia (strain R1808)).